The sequence spans 779 residues: METDVTSDTVEVLPQHKFDLRSLEAYLNQHLPGFGSDSRAVLTVTQYRSGQSNPTFFLQKGSQAYVLRKKPPGSLLPKAHKIDREFKIQKALFSIGFPVAKPLLYCRDASVIGTEFYVMEHVQGRIFRDFSIPGVSSAERAAIYVSVAETLAWLHSLDIRSLKLDKYGTGVGYCKRQVSTWTKQYQASAHQSIPAMDQLSTWLMKNLPDSDSEECLVHGDFKLDNIVFHPKECRVIAVLDWELSTFGHPLTDLAHLSLFYYWPRTLPMINRGSHIPENTGIPLMEELISIYCHRRGIDPNLPNWNFFMALSFFKLAGISQGVYRRYLMGNNSSEDSFLTANTVQPLAETGLQLSKRTLRTTPPQADAKSQLFAQSRRGQEVLTRVKQFMKQHVFPAEKEVAEYYAQSGNSAEKWGHPLVIEKLKEMAKAEGLWNLFLPAVSGLSQVDYALIAEETGKCFFAPDVFNCQAPDTGNMEVLHLYGSEQQKKQWLEPLLRGDITSVFCMTEPNVSSSDATNIECTIQRDGGGYIVNGKKWWSSGAGNPKCKIAIVLGRTESPSASRHRQHSMILVPMDTPGVELIRPLSVFGYMDNMHGGHWEVHFNHVRVPASNLILGEGRGFEISQGRLGPGRIHHCMRTVGLAERILQIMCDRAVQREAFKKKLYEHEVVAHWIAKSRIAIEEIRLLTLKAAHSIDTLGSASARKEIAMIKVAAPKAVCKIADWAIQVHGGAGVSQDYPLANMYAIIRTLRLADGPDEVHLSAIAKMELQDQARRLTARM.

Residues lysine 163, lysine 166, and lysine 175 each carry the N6-acetyllysine modification. Position 210 is a phosphoserine (serine 210). Residue tyrosine 323 is modified to Phosphotyrosine. N6-succinyllysine occurs at positions 368 and 390. Residues 503 to 513 (FCMTEPNVSSS), 511 to 513 (SSS), 537 to 539 (WSS), and serine 539 each bind FAD. Serine 513 provides a ligand contact to substrate. Residue 628 to 631 (GPGR) participates in substrate binding. Residues arginine 656, glutamine 726, and 726–730 (QVHGG) contribute to the FAD site. Glycine 754 provides a ligand contact to substrate. FAD is bound by residues 755 to 757 (PDE) and glutamate 757. Lysine 765 carries the post-translational modification N6-acetyllysine.

Belongs to the acyl-CoA dehydrogenase family. As to quaternary structure, homodimer. It depends on FAD as a cofactor.

The protein localises to the peroxisome. Its subcellular location is the mitochondrion membrane. It catalyses the reaction a 2,3-saturated acyl-CoA + oxidized [electron-transfer flavoprotein] + H(+) = a (2E)-enoyl-CoA + reduced [electron-transfer flavoprotein]. It carries out the reaction docosanoyl-CoA + oxidized [electron-transfer flavoprotein] + H(+) = (2E)-docosenoyl-CoA + reduced [electron-transfer flavoprotein]. The enzyme catalyses tetracosanoyl-CoA + oxidized [electron-transfer flavoprotein] + H(+) = (2E)-tetracosenoyl-CoA + reduced [electron-transfer flavoprotein]. The catalysed reaction is eicosanoyl-CoA + oxidized [electron-transfer flavoprotein] + H(+) = (2E)-eicosenoyl-CoA + reduced [electron-transfer flavoprotein]. It catalyses the reaction hexacosanoyl-CoA + oxidized [electron-transfer flavoprotein] + H(+) = (2E)-hexacosenoyl-CoA + reduced [electron-transfer flavoprotein]. It carries out the reaction tricosanoyl-CoA + oxidized [electron-transfer flavoprotein] + H(+) = (2E)-tricosenoyl-CoA + reduced [electron-transfer flavoprotein]. The protein operates within lipid metabolism; fatty acid beta-oxidation. Acyl-CoA dehydrogenase, that exhibits maximal activity towards saturated C22-CoA. Probably participates in beta-oxydation and energy production but could also play a role in the metabolism of specific fatty acids to control fatty acids composition of cellular lipids in brain. The sequence is that of Acyl-CoA dehydrogenase family member 11 (Acad11) from Mus musculus (Mouse).